The following is a 220-amino-acid chain: Fructose-6-phosphate aldolase (220 aa).

Lysine 85 serves as the catalytic Schiff-base intermediate with substrate.

This sequence belongs to the transaldolase family. Type 3A subfamily. As to quaternary structure, homodecamer.

The protein resides in the cytoplasm. The enzyme catalyses beta-D-fructose 6-phosphate = dihydroxyacetone + D-glyceraldehyde 3-phosphate. Functionally, catalyzes the reversible formation of fructose 6-phosphate from dihydroxyacetone and D-glyceraldehyde 3-phosphate via an aldolization reaction. The protein is Fructose-6-phosphate aldolase of Salmonella schwarzengrund (strain CVM19633).